The sequence spans 515 residues: MNTHNARDSDDESPLESEEHLKRFFAGRNLYSQTKIDDARKKSHDAKYAKEVEWDAKDTAKGKPVFKKYRQEIADKTSRCDAQFINNLHTYYGNGSELRELPETHYAVDFMGTTIATTEMTAELKKLKVLKKKTATSQFVREHRQLGFIPTPSRRSLSCTGRFMNFETKCDERPDRTNPEFSVGNNNFLSATISNLDEDFKTPSNCEHVASIVPKEISNALTALIPHVNVFDYEKGEMEIGKVLCSNKNLHAYVIPKQHDQEQMLKDFSARFLAWYNKLSHLQRDTFGTDKDPKRSGKQEDGKPMKPYFWRVNVILCLQEFQEEGTMFRRARHVCGIRPHKSQPGLDLYIEIDTGSMRALKTNYLTVRKLPQEFANVPTPILEVRFEGAKTEEDVARRIAHIRKTGRAYIKSFDTGKRKIYQNSFFNGQPKDWSNIETAVLLPPKESSMSKLFCEDRDCMGLCCTDQWLENAESSPGISTIPASWIADKNKKPFVDRSPQKFKFPASGSYMKPAN.

A disordered region spans residues 496–515 (DRSPQKFKFPASGSYMKPAN).

As to quaternary structure, may interact with pid-2, app-1 and prmt-5.

Its subcellular location is the cytoplasm. The protein localises to the perinuclear region. It localises to the P-body. Together with pid-5, it is involved in gene silencing mediated by a class of 21 nucleotide PIWI-interacting RNAs (piRNAs) that possess a uracil residue at the 5'-end (also called 21U-RNAs) and guide the Piwi protein prg-1 to its DNA targets for silencing. Together with pid-5, it is required for the biogenesis of secondary and tertiary 22G-siRNAs. Specifically, promotes the production of 22G-siRNAs from the 5' end of target mRNAs. Together with pid-5, plays a role in small RNA-directed transgenerational epigenetic inheritance (also called RNAe) over several generations and germline immortality. Together with pid-5, plays a role in the formation of liquid-like condensates in the cytoplasm called Z granules. In Caenorhabditis elegans, this protein is Protein pid-4.